A 350-amino-acid polypeptide reads, in one-letter code: Biotin synthase (350 aa).

The Radical SAM core domain maps to 38–256 (NYVQVSTLLS…IAVARIMMPT (219 aa)). Residues cysteine 53, cysteine 57, and cysteine 60 each coordinate [4Fe-4S] cluster. Residues cysteine 97, cysteine 128, cysteine 188, and arginine 260 each contribute to the [2Fe-2S] cluster site.

It belongs to the radical SAM superfamily. Biotin synthase family. As to quaternary structure, homodimer. [4Fe-4S] cluster serves as cofactor. It depends on [2Fe-2S] cluster as a cofactor.

It carries out the reaction (4R,5S)-dethiobiotin + (sulfur carrier)-SH + 2 reduced [2Fe-2S]-[ferredoxin] + 2 S-adenosyl-L-methionine = (sulfur carrier)-H + biotin + 2 5'-deoxyadenosine + 2 L-methionine + 2 oxidized [2Fe-2S]-[ferredoxin]. It functions in the pathway cofactor biosynthesis; biotin biosynthesis; biotin from 7,8-diaminononanoate: step 2/2. In terms of biological role, catalyzes the conversion of dethiobiotin (DTB) to biotin by the insertion of a sulfur atom into dethiobiotin via a radical-based mechanism. In Vibrio vulnificus (strain CMCP6), this protein is Biotin synthase.